Reading from the N-terminus, the 484-residue chain is Solute carrier family 40 member 1 (484 aa).

The next 11 membrane-spanning stretches (helical) occupy residues 58-78 (LLTA…GPIV), 94-114 (WLLL…ALLV), 123-143 (GFPA…LAAL), 189-209 (VLSG…ALAA), 212-232 (LAAV…FPAL), 279-299 (VVLP…FGTL), 308-328 (GIPA…GIAA), 346-366 (LWSI…VWAG), 377-397 (LMGG…AVMQ), 413-433 (GVQN…GIIV), and 442-462 (LIVL…MHVY).

It belongs to the ferroportin (FP) (TC 2.A.100) family. SLC40A subfamily.

It localises to the membrane. Its function is as follows. May be involved in iron transport and iron homeostasis. The sequence is that of Solute carrier family 40 member 1 from Oryza sativa subsp. japonica (Rice).